Here is a 593-residue protein sequence, read N- to C-terminus: Cysteine/serine-rich nuclear protein 1 (593 aa).

Disordered stretches follow at residues 1–66 (MTGL…RDFC), 313–392 (FREL…GVDD), and 478–497 (REGSLPGTSVPPSMDAGQSS). 2 stretches are compositionally biased toward low complexity: residues 17-46 (SSVSSSSSSSSSSSGCQSLSCSPSSSVSRA) and 351-372 (SCSSDMTDSSTASSSASGTSGA).

Belongs to the AXUD1 family.

Its subcellular location is the nucleus. In terms of biological role, binds to the consensus sequence 5'-AGAGTG-3' and has transcriptional activator activity. May have a tumor-suppressor function. May play a role in apoptosis. This Pongo abelii (Sumatran orangutan) protein is Cysteine/serine-rich nuclear protein 1 (CSRNP1).